The chain runs to 460 residues: Proline--tRNA ligase (460 aa).

The protein belongs to the class-II aminoacyl-tRNA synthetase family. ProS type 3 subfamily. Homodimer.

It is found in the cytoplasm. It carries out the reaction tRNA(Pro) + L-proline + ATP = L-prolyl-tRNA(Pro) + AMP + diphosphate. Functionally, catalyzes the attachment of proline to tRNA(Pro) in a two-step reaction: proline is first activated by ATP to form Pro-AMP and then transferred to the acceptor end of tRNA(Pro). This chain is Proline--tRNA ligase, found in Methanococcus maripaludis (strain DSM 14266 / JCM 13030 / NBRC 101832 / S2 / LL).